Consider the following 315-residue polypeptide: Porphobilinogen deaminase (315 aa).

Cysteine 251 bears the S-(dipyrrolylmethanemethyl)cysteine mark.

This sequence belongs to the HMBS family. Monomer. Dipyrromethane is required as a cofactor.

It catalyses the reaction 4 porphobilinogen + H2O = hydroxymethylbilane + 4 NH4(+). It functions in the pathway porphyrin-containing compound metabolism; protoporphyrin-IX biosynthesis; coproporphyrinogen-III from 5-aminolevulinate: step 2/4. In terms of biological role, tetrapolymerization of the monopyrrole PBG into the hydroxymethylbilane pre-uroporphyrinogen in several discrete steps. This chain is Porphobilinogen deaminase, found in Sphingopyxis alaskensis (strain DSM 13593 / LMG 18877 / RB2256) (Sphingomonas alaskensis).